A 409-amino-acid chain; its full sequence is Ingression protein 1 (409 aa).

Positions 1–114 (MSEEVWNGNQ…DPKEGYCTWY (114 aa)) constitute a C2 domain. The segment at 300–409 (LSYDEDDDDD…TRKRPPPRLS (110 aa)) is disordered. Residues 302 to 313 (YDEDDDDDDEND) show a composition bias toward acidic residues. Polar residues predominate over residues 315–328 (FYSSSHRVSHNYNQ). The segment covering 360-377 (LDSSSPNSHPHPSGLNSP) has biased composition (low complexity). A compositionally biased stretch (polar residues) spans 384-399 (TTSNSNFNSRKNSMSP). Ser392 bears the Phosphoserine mark. Residues 400 to 409 (TRKRPPPRLS) are compositionally biased toward basic residues.

This sequence belongs to the INN1/fic1 family. In terms of assembly, interacts with CYK2, CYK3 and IQG1.

The protein resides in the bud neck. Required for the ingression of the plasma membrane into the bud neck at the end of cytokinesis, leading to the separation of the mother and daughter cells. Stimulates the synthesis of the primary septum (PS) by CHS2. This Saccharomyces cerevisiae (strain ATCC 204508 / S288c) (Baker's yeast) protein is Ingression protein 1 (INN1).